We begin with the raw amino-acid sequence, 196 residues long: Peptide deformylase (196 aa).

Residues Cys97 and His139 each coordinate Fe cation. Glu140 is a catalytic residue. Residue His143 coordinates Fe cation. Residues 171 to 187 (LDAQEPKRAPHSPHTDA) show a composition bias toward basic and acidic residues. Residues 171–196 (LDAQEPKRAPHSPHTDAQKPGAASDL) are disordered.

Belongs to the polypeptide deformylase family. It depends on Fe(2+) as a cofactor.

It catalyses the reaction N-terminal N-formyl-L-methionyl-[peptide] + H2O = N-terminal L-methionyl-[peptide] + formate. In terms of biological role, removes the formyl group from the N-terminal Met of newly synthesized proteins. Requires at least a dipeptide for an efficient rate of reaction. N-terminal L-methionine is a prerequisite for activity but the enzyme has broad specificity at other positions. This Methylocella silvestris (strain DSM 15510 / CIP 108128 / LMG 27833 / NCIMB 13906 / BL2) protein is Peptide deformylase.